Here is a 727-residue protein sequence, read N- to C-terminus: MAPPAKRARRGLVPPGYKYLGPGNSLDQGEPTNPSDAAAKEHDEAYAAYLRSGKNPYLYFSPADQRFIDQTKDAKDWGGKIGHYFFRAKKAIAPVLTDTPDHPSTSRPTKPTKRSKPPPHIFINLAKKKKAGAGQVKRDNLAPMSDGAVQPDGGQPAVRNERATGSGNGSGGGGGGGSGGVGISTGTFNNQTEFKFLENGWVEITANSSRLVHLNMPESENYKRVVVNNMDKTAVKGNMALDDIHVQIVTPWSLVDANAWGVWFNPGDWQLIVNTMSELHLVSFEQEIFNVVLKTVSESATQPPTKVYNNDLTASLMVALDSNNTMPFTPAAMRSETLGFYPWKPTIPTPWRYYFQWDRTLIPSHTGTSGTPTNVYHGTDPDDVQFYTIENSVPVHLLRTGDEFATGTFFFDCKPCRLTHTWQTNRALGLPPFLNSLPQSEGATNFGDIGVQQDKRRGVTQMGNTDYITEATIMRPAEVGYSAPYYSFEASTQGPFKTPIAAGRGGAQTDENQAADGDPRYAFGRQHGQKTTTTGETPERFTYIAHQDTGRYPEGDWIQNINFNLPVTNDNVLLPTDPIGGKTGINYTNIFNTYGPLTALNNVPPVYPNGQIWDKEFDTDLKPRLHVNAPFVCQNNCPGQLFVKVAPNLTNEYDPDASANMSRIVTYSDFWWKGKLVFKAKLRASHTWNPIQQMSINVDNQFNYVPNNIGAMKIVYEKSQLAPRKLY.

Over residues 1–10 the composition is skewed to basic residues; it reads MAPPAKRARR. Disordered regions lie at residues 1–38, 95–120, and 141–184; these read MAPPAKRARRGLVPPGYKYLGPGNSLDQGEPTNPSDAA, VLTDTPDHPSTSRPTKPTKRSKPPPH, and LAPM…VGIS. Positions 4-13 match the Nuclear localization signal motif; sequence PAKRARRGLV. Residues 19–64 are phospholipase A2-like; that stretch reads YLGPGNSLDQGEPTNPSDAAAKEHDEAYAAYLRSGKNPYLYFSPAD. Residues 25-35 show a composition bias toward polar residues; that stretch reads SLDQGEPTNPS. Over residues 166-183 the composition is skewed to gly residues; that stretch reads SGNGSGGGGGGGSGGVGI. Position 323 (asparagine 323) interacts with Mg(2+). A disulfide bond links cysteine 633 and cysteine 637.

This sequence belongs to the parvoviridae capsid protein family. Interacts with host TFRC.

It localises to the virion. The protein localises to the host nucleus. Functionally, capsid protein self-assembles to form an icosahedral capsid with a T=1 symmetry, about 22 nm in diameter, and consisting of 60 copies of two size variants of the capsid proteins, VP1 and VP2, which differ by the presence of an N-terminal extension in the minor protein VP1. The capsid encapsulates the genomic ssDNA. Capsid proteins are responsible for the attachment to host cell receptors. This attachment induces virion internalization predominantly through clathrin-dependent endocytosis. Binding to the host receptors also induces capsid rearrangements leading to surface exposure of VP1 N-terminus, specifically its phospholipase A2-like region and putative nuclear localization signal(s). VP1 N-terminus might serve as a lipolytic enzyme to breach the endosomal membrane during entry into host cell and might contribute to virus transport to the nucleus. In Feline panleukopenia virus (strain 193) (FPV), this protein is Capsid protein VP1.